The sequence spans 309 residues: Probable manganese-dependent inorganic pyrophosphatase (309 aa).

Residues His9, Asp13, Asp15, Asp75, His97, and Asp149 each coordinate Mn(2+).

Belongs to the PPase class C family. Requires Mn(2+) as cofactor.

The protein resides in the cytoplasm. The catalysed reaction is diphosphate + H2O = 2 phosphate + H(+). This Bacillus anthracis (strain CDC 684 / NRRL 3495) protein is Probable manganese-dependent inorganic pyrophosphatase.